We begin with the raw amino-acid sequence, 194 residues long: Interleukin-18 (194 aa).

Residues 1 to 36 (MAAMSEEGSCVNFKEMMFIDNTLYLIPEDNGDLESD) constitute a propeptide that is removed on maturation.

Belongs to the IL-1 family. As to quaternary structure, forms a ternary complex with ligand-binding receptor subunit IL18R1 and signaling receptor subunit IL18RAP at the plasma membrane. Mature IL18 first binds to IL18R1 forming a low affinity binary complex, which then interacts with IL18RAP to form a high affinity ternary complex that signals inside the cell. Interacts with cargo receptor TMED10; the interaction mediates the translocation from the cytoplasm into the ERGIC (endoplasmic reticulum-Golgi intermediate compartment) and thereby secretion. The pro-IL-18 precursor is processed by CASP1 to yield its mature, active form. The pro-IL-18 precursor is however not processed by Casp4/Casp11 in rodents. The pro-IL-18 precursor features autoinhibitory interactions between the propeptide and the post-cleavage-site region, preventing recognition by the IL18R1 receptor. Processing by CASP1 induces conformational changes to generate critical receptor-binding sites. The mature form is then secreted and released in the extracellular milieu by passing through the gasdermin-D (GSDMD) pore. In contrast, cleavage by CASP3 inactivates IL18.

It localises to the cytoplasm. It is found in the cytosol. Its subcellular location is the secreted. Pro-inflammatory cytokine primarily involved in epithelial barrier repair, polarized T-helper 1 (Th1) cell and natural killer (NK) cell immune responses. Upon binding to IL18R1 and IL18RAP, forms a signaling ternary complex which activates NF-kappa-B, triggering synthesis of inflammatory mediators. Synergizes with IL12/interleukin-12 to induce IFNG synthesis from T-helper 1 (Th1) cells and natural killer (NK) cells. Involved in transduction of inflammation downstream of pyroptosis: its mature form is specifically released in the extracellular milieu by passing through the gasdermin-D (GSDMD) pore. In Rattus norvegicus (Rat), this protein is Interleukin-18 (Il18).